The primary structure comprises 370 residues: MLPRLICINDYEQHAKSVLPKSIYDYYRSGANDEETLADNIAAFSRWKLYPRMLRNVAETDLSTSVLGQRVSMPICVGATAMQRMAHVDGELATVRACQSLGTGMMLSSWATSSIEEVAEAGPEALRWLQLYIYKDREVTKKLVRQAEKMGYKAIFVTVDTPYLGNRLDDVRNRFKLPPQLRMKNFETSTLSFSPEENFGDDSGLAAYVAKAIDPSISWEDIKWLRRLTSLPIVAKGILRGDDAREAVKHGLNGILVSNHGARQLDGVPATIDVLPEIVEAVEGKVEVFLDGGVRKGTDVLKALALGAKAVFVGRPIVWGLAFQGEKGVQDVLEILKEEFRLAMALSGCQNVKVIDKTLVRKNPLAVSKI.

The FMN hydroxy acid dehydrogenase domain maps to 1 to 365; it reads MLPRLICIND…DKTLVRKNPL (365 aa). Tyr26 contributes to the glyoxylate binding site. FMN-binding positions include 79–81, Ser108, and Gln130; that span reads ATA. Position 132 (Tyr132) interacts with glyoxylate. Thr158 is a binding site for FMN. Arg167 is a binding site for glyoxylate. Lys184 is subject to N6-succinyllysine. Ser194 and Ser230 each carry phosphoserine. Residues Lys236 and Ser258 each contribute to the FMN site. Residues His260 and Arg263 each coordinate glyoxylate. His260 functions as the Proton acceptor in the catalytic mechanism. FMN is bound by residues 291–295 and 314–315; these read DGGVR and GR. Positions 368 to 370 match the Microbody targeting signal motif; that stretch reads SKI.

It belongs to the FMN-dependent alpha-hydroxy acid dehydrogenase family. As to quaternary structure, homotetramer. The cofactor is FMN. Highly expressed in liver.

It is found in the peroxisome matrix. It catalyses the reaction a (2S)-2-hydroxycarboxylate + O2 = a 2-oxocarboxylate + H2O2. It carries out the reaction glycolate + O2 = glyoxylate + H2O2. The catalysed reaction is glyoxylate + O2 + H2O = oxalate + H2O2 + H(+). The enzyme catalyses 2-hydroxyhexadecanoate + O2 = 2-oxohexadecanoate + H2O2. It catalyses the reaction 2-hydroxyoctanoate + O2 = 2-oxooctanoate + H2O2. The protein operates within amino-acid biosynthesis; glycine biosynthesis. Inhibited by its product oxalate. Inhibited by high concentrations of dichlorophenolindophenol (DCIP) in vitro. Functionally, broad substrate specificity (S)-2-hydroxy-acid oxidase that preferentially oxidizes glycolate. The glyoxylate produced by the oxidation of glycolate can then be utilized by alanine-glyoxylate aminotransferase for the peroxisomal synthesis of glycine; this pathway appears to be an important step for the detoxification of glyoxylate which, if allowed to accumulate, may be metabolized to oxalate with formation of kidney stones. Can also catalyze the oxidation of glyoxylate, and long chain hydroxyacids such as 2-hydroxyhexadecanoate and 2-hydroxyoctanoate, albeit with much lower catalytic efficiency. Active in vitro with the artificial electron acceptor 2,6-dichlorophenolindophenol (DCIP), but O2 is believed to be the physiological electron acceptor, leading to the production of H2O2. Is not active on L-lactate and 2-hydroxybutanoate. The sequence is that of 2-Hydroxyacid oxidase 1 from Homo sapiens (Human).